Reading from the N-terminus, the 413-residue chain is Tyrosine--tRNA ligase (413 aa).

Residues proline 59–histidine 68 carry the 'HIGH' region motif. The 'KMSKS' region motif lies at lysine 243 to serine 247. ATP is bound at residue lysine 246. The S4 RNA-binding domain maps to leucine 351–leucine 411.

It belongs to the class-I aminoacyl-tRNA synthetase family. TyrS type 2 subfamily. Homodimer.

It is found in the cytoplasm. The catalysed reaction is tRNA(Tyr) + L-tyrosine + ATP = L-tyrosyl-tRNA(Tyr) + AMP + diphosphate + H(+). Functionally, catalyzes the attachment of tyrosine to tRNA(Tyr) in a two-step reaction: tyrosine is first activated by ATP to form Tyr-AMP and then transferred to the acceptor end of tRNA(Tyr). The polypeptide is Tyrosine--tRNA ligase (Burkholderia mallei (strain ATCC 23344)).